The sequence spans 396 residues: S-adenosylmethionine synthase (396 aa).

Residue His15 participates in ATP binding. Mg(2+) is bound at residue Asp17. Glu43 is a K(+) binding site. 2 residues coordinate L-methionine: Glu56 and Gln99. Residues 99–109 (QSGDIAQGVDT) are flexible loop. ATP is bound by residues 173-175 (DGK), 241-242 (RF), Asp250, 256-257 (RK), Ala273, and Lys277. Asp250 contributes to the L-methionine binding site. Residue Lys281 coordinates L-methionine.

This sequence belongs to the AdoMet synthase family. Homotetramer; dimer of dimers. It depends on Mg(2+) as a cofactor. Requires K(+) as cofactor.

The protein localises to the cytoplasm. The catalysed reaction is L-methionine + ATP + H2O = S-adenosyl-L-methionine + phosphate + diphosphate. It functions in the pathway amino-acid biosynthesis; S-adenosyl-L-methionine biosynthesis; S-adenosyl-L-methionine from L-methionine: step 1/1. In terms of biological role, catalyzes the formation of S-adenosylmethionine (AdoMet) from methionine and ATP. The overall synthetic reaction is composed of two sequential steps, AdoMet formation and the subsequent tripolyphosphate hydrolysis which occurs prior to release of AdoMet from the enzyme. This is S-adenosylmethionine synthase from Nocardioides sp. (strain ATCC BAA-499 / JS614).